The primary structure comprises 334 residues: Protein U17/U16 (334 aa).

This sequence belongs to the herpesviridae US22 family.

Isoform 3 can transactivate the human immunodeficiency virus type 1 promoter. This Human herpesvirus 6A (strain Uganda-1102) (HHV-6 variant A) protein is Protein U17/U16 (U17/U16).